Consider the following 502-residue polypeptide: MEIRAEEISEIIRKQIKEYGTEVAVAETGTIISIGDGIARIHGLDKAMAGELLEFPGGISGMVLNLEEDNVGAAILGEFSEIKEGDTVKRTGKIVEVPVGEALIGRVVNALGQPIDGKGPINTDKFGKVEVKAPGIVQRKSVHQPMQTGLKAIDSMVPIGRGQRELIIGDRQTGKTAVAIDTIINQKGGDVVCIYVAIGQKRSTVAQVVSKLQEHGAMDYTIIVAATASEPAPLQFISPYTGVTMGEYFRDSGKHALIIYDDLSKQAVAYRQLSLLLRRPPGREAYPGDVFYLHSRLLERACKVSDACGAGSLTALPIIETQAGDVSAYIPTNVISITDGQIYLESDLFYSGVRPAINVGLSVSRVGGSAQVKAMKQVAGTLRLSLAQYREMAAFAQFGSDLDKATQMQLARGERLVEILKQPQYKPVPNEKQVLIIFAANNGFIDDYPVSALRRYETELYTFFDTRKADVLADLRDKKAIDDDIKGKIVAALNEFKKEFTA.

169 to 176 is an ATP binding site; sequence GDRQTGKT.

This sequence belongs to the ATPase alpha/beta chains family. In terms of assembly, F-type ATPases have 2 components, CF(1) - the catalytic core - and CF(0) - the membrane proton channel. CF(1) has five subunits: alpha(3), beta(3), gamma(1), delta(1), epsilon(1). CF(0) has three main subunits: a(1), b(2) and c(9-12). The alpha and beta chains form an alternating ring which encloses part of the gamma chain. CF(1) is attached to CF(0) by a central stalk formed by the gamma and epsilon chains, while a peripheral stalk is formed by the delta and b chains.

Its subcellular location is the cell inner membrane. The enzyme catalyses ATP + H2O + 4 H(+)(in) = ADP + phosphate + 5 H(+)(out). In terms of biological role, produces ATP from ADP in the presence of a proton gradient across the membrane. The alpha chain is a regulatory subunit. This chain is ATP synthase subunit alpha, found in Geotalea uraniireducens (strain Rf4) (Geobacter uraniireducens).